A 207-amino-acid chain; its full sequence is Ras-related protein RABH1d (207 aa).

Gly16–Thr23 lines the GTP pocket. The Effector region motif lies at Tyr38–Phe46. GTP is bound by residues Asp64–Gln68, Asn122–Asp125, and Ser152–Ala153. S-geranylgeranyl cysteine attachment occurs at residues Cys205 and Cys207. Residue Cys207 is modified to Cysteine methyl ester.

This sequence belongs to the small GTPase superfamily. Rab family.

The protein localises to the golgi apparatus membrane. Its function is as follows. Protein transport. Regulator of membrane traffic from the Golgi apparatus towards the endoplasmic reticulum (ER). This is Ras-related protein RABH1d (RABH1D) from Arabidopsis thaliana (Mouse-ear cress).